A 151-amino-acid polypeptide reads, in one-letter code: Large-conductance mechanosensitive channel (151 aa).

2 helical membrane-spanning segments follow: residues 14 to 34 and 85 to 105; these read VVDM…VNSL and GLFV…FLLV.

Belongs to the MscL family. As to quaternary structure, homopentamer.

It is found in the cell inner membrane. Functionally, channel that opens in response to stretch forces in the membrane lipid bilayer. May participate in the regulation of osmotic pressure changes within the cell. This Chlorobaculum tepidum (strain ATCC 49652 / DSM 12025 / NBRC 103806 / TLS) (Chlorobium tepidum) protein is Large-conductance mechanosensitive channel.